A 115-amino-acid chain; its full sequence is Dolichyl-diphosphooligosaccharide--protein glycosyltransferase subunit DAD1 (115 aa).

Residues 1-31 (MARSTSKDAQALIQSLRSAYAATPSNLKIID) lie on the Cytoplasmic side of the membrane. A helical transmembrane segment spans residues 32-52 (LYVVFAVFTALIQVVYMAIVG). Residues 53–55 (SFP) are Lumenal-facing. A helical membrane pass occupies residues 56–76 (FNAFLSGLLSCIGTAVLAVCL). The Cytoplasmic segment spans residues 77 to 94 (RIQVNKENKEFKDLAPER). A helical membrane pass occupies residues 95 to 115 (AFADFVLCNLVLHLVIMNFLG).

Belongs to the DAD/OST2 family. In terms of assembly, component of the oligosaccharyltransferase (OST) complex.

It localises to the endoplasmic reticulum membrane. It participates in protein modification; protein glycosylation. In terms of biological role, subunit of the oligosaccharyl transferase (OST) complex that catalyzes the initial transfer of a defined glycan (Glc(3)Man(9)GlcNAc(2) in eukaryotes) from the lipid carrier dolichol-pyrophosphate to an asparagine residue within an Asn-X-Ser/Thr consensus motif in nascent polypeptide chains, the first step in protein N-glycosylation. N-glycosylation occurs cotranslationally and the complex associates with the Sec61 complex at the channel-forming translocon complex that mediates protein translocation across the endoplasmic reticulum (ER). All subunits are required for a maximal enzyme activity. This Betula pendula (European white birch) protein is Dolichyl-diphosphooligosaccharide--protein glycosyltransferase subunit DAD1 (DAD1).